A 375-amino-acid polypeptide reads, in one-letter code: Squamosa promoter-binding-like protein 9 (375 aa).

2 disordered regions span residues 1-30 and 43-73; these read MEMG…SFSG and GGGG…QIPR. Positions 18–30 are enriched in low complexity; the sequence is SGGSSTESSSFSG. The segment at 71–148 adopts an SBP-type zinc-finger fold; the sequence is IPRCQVEGCG…AGHNERRRKP (78 aa). Zn(2+) contacts are provided by C74, C79, C96, H99, C115, C118, H122, and C134. The Bipartite nuclear localization signal motif lies at 131–147; it reads KRSCRRRLAGHNERRRK. Disordered stretches follow at residues 252 to 278 and 345 to 375; these read LLSN…NTWR and SDHH…NWSL. Over residues 262 to 275 the composition is skewed to low complexity; that stretch reads NNNNNNNNNNNNNN. Residues 345-362 are compositionally biased toward basic and acidic residues; sequence SDHHHQSRRQYMEDENTR. The segment covering 363–375 has biased composition (polar residues); that stretch reads AYDSSSHHTNWSL.

The cofactor is Zn(2+).

The protein resides in the nucleus. It is found in the cytoplasm. Functionally, trans-acting factor that binds specifically to the consensus nucleotide sequence 5'-TNCGTACAA-3'. This Arabidopsis thaliana (Mouse-ear cress) protein is Squamosa promoter-binding-like protein 9 (SPL9).